Consider the following 343-residue polypeptide: Aspartate carbamoyltransferase catalytic subunit (343 aa).

Carbamoyl phosphate-binding residues include arginine 91 and threonine 92. Lysine 119 is an L-aspartate binding site. Positions 141, 171, and 174 each coordinate carbamoyl phosphate. L-aspartate contacts are provided by arginine 204 and arginine 259. Glycine 300 and proline 301 together coordinate carbamoyl phosphate.

This sequence belongs to the aspartate/ornithine carbamoyltransferase superfamily. ATCase family. Heterododecamer (2C3:3R2) of six catalytic PyrB chains organized as two trimers (C3), and six regulatory PyrI chains organized as three dimers (R2).

The enzyme catalyses carbamoyl phosphate + L-aspartate = N-carbamoyl-L-aspartate + phosphate + H(+). The protein operates within pyrimidine metabolism; UMP biosynthesis via de novo pathway; (S)-dihydroorotate from bicarbonate: step 2/3. Functionally, catalyzes the condensation of carbamoyl phosphate and aspartate to form carbamoyl aspartate and inorganic phosphate, the committed step in the de novo pyrimidine nucleotide biosynthesis pathway. The chain is Aspartate carbamoyltransferase catalytic subunit from Burkholderia multivorans (strain ATCC 17616 / 249).